The sequence spans 330 residues: Erlin-2-B (330 aa).

Over 1–2 (MS) the chain is Cytoplasmic. A helical membrane pass occupies residues 3-23 (HAGAIAALGVALIAAALFSAI). Over 24–330 (HKIEEGHVGV…NEPAAAEELK (307 aa)) the chain is Lumenal. N106 carries N-linked (GlcNAc...) asparagine glycosylation. Residues 308 to 330 (SSSAGPRVQSAKRNEPAAAEELK) form a disordered region. Basic and acidic residues predominate over residues 319-330 (KRNEPAAAEELK).

This sequence belongs to the band 7/mec-2 family.

It is found in the endoplasmic reticulum membrane. Its function is as follows. Mediates the endoplasmic reticulum-associated degradation (ERAD) of inositol 1,4,5-trisphosphate receptors (IP3Rs). Promotes sterol-accelerated ERAD of HMGCR. Involved in regulation of cellular cholesterol homeostasis by regulation the SREBP signaling pathway. The chain is Erlin-2-B (erlin2-b) from Xenopus laevis (African clawed frog).